We begin with the raw amino-acid sequence, 612 residues long: Transcription factor ffsR (612 aa).

The segment covering 1–12 has biased composition (polar residues); it reads MDTLTAPTTQSE. Residues 1–21 form a disordered region; sequence MDTLTAPTTQSEQPPPPLTAS. A DNA-binding region (zn(2)-C6 fungal-type) is located at residues 28-60; that stretch reads CDRCRSHKLRCNRDLMTSTNSPCQRCRKARVKC. Basic and acidic residues predominate over residues 73–82; sequence EELKNGENVH. Disordered stretches follow at residues 73–130, 154–249, and 451–470; these read EELK…SMSG, DGST…VTSS, and GQGP…TTTN. 3 stretches are compositionally biased toward polar residues: residues 92–103, 154–169, and 238–249; these read SHRTASTPSNHA, DGST…TNGS, and LTQQHPAGVTSS. Residues 458-470 are compositionally biased toward low complexity; sequence PSQGSSSRSTTTN.

It is found in the nucleus. Functionally, transcription factor that specifically regulates the expression of the gene cluster that mediates the biosynthesis of the cytotoxic leucine-containing cytochalasans, including aspochalasin C, aspochalasin E, TMC-169, flavichalasine F, aspergillin PZ, aspochalasin M and flavichalasine G. The sequence is that of Transcription factor ffsR from Aspergillus flavipes.